The following is a 186-amino-acid chain: Glycerol-3-phosphate acyltransferase 1 (186 aa).

5 helical membrane-spanning segments follow: residues 9–29 (MQFL…AYIV), 58–78 (GYFV…VSIA), 85–105 (STFV…PVLF), 121–141 (IAFD…FYLI), and 161–181 (ILYS…VLIL).

The protein belongs to the PlsY family. As to quaternary structure, probably interacts with PlsX.

The protein localises to the cell membrane. It catalyses the reaction an acyl phosphate + sn-glycerol 3-phosphate = a 1-acyl-sn-glycero-3-phosphate + phosphate. It participates in lipid metabolism; phospholipid metabolism. In terms of biological role, catalyzes the transfer of an acyl group from acyl-phosphate (acyl-PO(4)) to glycerol-3-phosphate (G3P) to form lysophosphatidic acid (LPA). This enzyme utilizes acyl-phosphate as fatty acyl donor, but not acyl-CoA or acyl-ACP. This is Glycerol-3-phosphate acyltransferase 1 from Bacillus cereus (strain ZK / E33L).